Here is a 360-residue protein sequence, read N- to C-terminus: A-type ATP synthase subunit C (360 aa).

The protein belongs to the V-ATPase V0D/AC39 subunit family. As to quaternary structure, has multiple subunits, A(3), B(3), C, D, E, F, G, I and K(x); there may be a few other subunits as well.

Its subcellular location is the cell membrane. Component of the A-type ATP synthase that produces ATP from ADP in the presence of a proton gradient across the membrane. The chain is A-type ATP synthase subunit C from Methanosarcina mazei (strain ATCC BAA-159 / DSM 3647 / Goe1 / Go1 / JCM 11833 / OCM 88) (Methanosarcina frisia).